The following is a 266-amino-acid chain: MASFVESGWQYLVTHFSDFQLACIGSFLLHESVFFLSGLPFIFLERQGFLSKYKIQTKNNTPAAQGKCITRLLLYHFSVNLPLMLASYPVFRAMGMRSSFPLPSWKEVSAQILFYFIIEDFVFYWGHRILHSKWLYKNVHSVHHEYATPFGLTSEYAHPAEILFLGFATIVGPALTGPHLITLWLWMVLRVLETVEAHCGYHFPWSLSNFLPLYGGADFHDYHHRLLYTKSGNYSSTFVYMDWIFGTDKGYRRLKTLKENGDMKQT.

3 helical membrane passes run 24–44 (IGSF…FIFL), 71–91 (RLLL…YPVF), and 107–127 (EVSA…YWGH). In terms of domain architecture, Fatty acid hydroxylase spans 113–247 (LFYFIIEDFV…FVYMDWIFGT (135 aa)). The Histidine box-1 signature appears at 127–131 (HRILH). Residues 140–144 (HSVHH) carry the Histidine box-2 motif. A helical transmembrane segment spans residues 162–182 (ILFLGFATIVGPALTGPHLIT). The Histidine box-3 signature appears at 219-225 (FHDYHHR).

The protein belongs to the sterol desaturase family. Fe cation serves as cofactor. Expressed in shoots, roots, siliques and flowers, and, slightly, in developing seeds.

The protein localises to the endoplasmic reticulum membrane. The catalysed reaction is 4,4-dimethyl-5alpha-cholest-7-en-3beta-ol + 6 Fe(II)-[cytochrome b5] + 3 O2 + 5 H(+) = 4alpha-carboxy-4beta-methyl-5alpha-cholest-7-ene-3beta-ol + 6 Fe(III)-[cytochrome b5] + 4 H2O. The enzyme catalyses 24-methylidenelophenol + 6 Fe(II)-[cytochrome b5] + 3 O2 + 5 H(+) = 4alpha-carboxy-ergosta-7,24(24(1))-dien-3beta-ol + 6 Fe(III)-[cytochrome b5] + 4 H2O. Non-heme iron oxygenase involved in sterols biosynthesis by catalyzing the removal of the second methyl group at the C-4 position. 24-ethylidenelophenol and 24-ethyllophenol are the preferred substrates. Together with SMO2-1, required during embryogenesis, probably by maintaining sterols and auxin homeostasis. This is Methylsterol monooxygenase 2-2 from Arabidopsis thaliana (Mouse-ear cress).